A 174-amino-acid chain; its full sequence is Ribosome maturation factor RimM (174 aa).

In terms of domain architecture, PRC barrel spans Ala101 to Glu174.

This sequence belongs to the RimM family. In terms of assembly, binds ribosomal protein uS19.

It localises to the cytoplasm. In terms of biological role, an accessory protein needed during the final step in the assembly of 30S ribosomal subunit, possibly for assembly of the head region. Essential for efficient processing of 16S rRNA. May be needed both before and after RbfA during the maturation of 16S rRNA. It has affinity for free ribosomal 30S subunits but not for 70S ribosomes. The sequence is that of Ribosome maturation factor RimM from Treponema pallidum (strain Nichols).